A 610-amino-acid chain; its full sequence is Pentatricopeptide repeat-containing protein At3g15590, mitochondrial (610 aa).

A mitochondrion-targeting transit peptide spans 1–71 (MYSLSRILQR…FSRFFGIHKL (71 aa)). A disordered region spans residues 88 to 142 (EELSESEEAVPVSGDVPEGVVDDDSLFEPELGSDNDDLEIEEKHSKDGGKPTKKR). Positions 107–127 (VVDDDSLFEPELGSDNDDLEI) are enriched in acidic residues. Over residues 128–137 (EEKHSKDGGK) the composition is skewed to basic and acidic residues. PPR repeat units follow at residues 241 to 275 (GEVV…KFPT), 276 to 309 (SVFA…NIKP), 310 to 344 (SRAT…GIEL), 345 to 379 (DPEL…GLQQ), 380 to 410 (TPWV…VDQN), 412 to 442 (RYDN…LVEK), 447 to 481 (PMMP…GIAI), 482 to 517 (GPST…KMRP), and 518 to 552 (MFTT…SYAA).

It belongs to the PPR family. P subfamily.

The protein localises to the mitochondrion. This is Pentatricopeptide repeat-containing protein At3g15590, mitochondrial from Arabidopsis thaliana (Mouse-ear cress).